We begin with the raw amino-acid sequence, 79 residues long: RNA-binding protein KhpA (79 aa).

Residues 30–79 (GRVLEVRVHPDDLGKVIGRNGRTARALRTVVGAIGGRGVRVDLVDVDHVR) enclose the KH domain.

This sequence belongs to the KhpA RNA-binding protein family.

The protein resides in the cytoplasm. It localises to the nucleoid. A probable RNA-binding protein. The polypeptide is RNA-binding protein KhpA (Streptomyces coelicolor (strain ATCC BAA-471 / A3(2) / M145)).